The primary structure comprises 363 residues: 3-isopropylmalate dehydrogenase (363 aa).

G78–E91 is an NAD(+) binding site. Substrate is bound by residues R99, R109, R138, and D227. Residues D227, D251, and D255 each coordinate Mg(2+). G285–N297 lines the NAD(+) pocket.

It belongs to the isocitrate and isopropylmalate dehydrogenases family. LeuB type 1 subfamily. In terms of assembly, homodimer. The cofactor is Mg(2+). Mn(2+) is required as a cofactor.

It is found in the cytoplasm. The catalysed reaction is (2R,3S)-3-isopropylmalate + NAD(+) = 4-methyl-2-oxopentanoate + CO2 + NADH. It functions in the pathway amino-acid biosynthesis; L-leucine biosynthesis; L-leucine from 3-methyl-2-oxobutanoate: step 3/4. Its function is as follows. Catalyzes the oxidation of 3-carboxy-2-hydroxy-4-methylpentanoate (3-isopropylmalate) to 3-carboxy-4-methyl-2-oxopentanoate. The product decarboxylates to 4-methyl-2 oxopentanoate. The chain is 3-isopropylmalate dehydrogenase from Shigella flexneri.